We begin with the raw amino-acid sequence, 89 residues long: Small ribosomal subunit protein uS15 (89 aa).

This sequence belongs to the universal ribosomal protein uS15 family. In terms of assembly, part of the 30S ribosomal subunit. Forms a bridge to the 50S subunit in the 70S ribosome, contacting the 23S rRNA.

Its function is as follows. One of the primary rRNA binding proteins, it binds directly to 16S rRNA where it helps nucleate assembly of the platform of the 30S subunit by binding and bridging several RNA helices of the 16S rRNA. Forms an intersubunit bridge (bridge B4) with the 23S rRNA of the 50S subunit in the ribosome. The sequence is that of Small ribosomal subunit protein uS15 from Allorhizobium ampelinum (strain ATCC BAA-846 / DSM 112012 / S4) (Agrobacterium vitis (strain S4)).